Here is a 264-residue protein sequence, read N- to C-terminus: S-adenosylmethionine decarboxylase proenzyme (264 aa).

Ser112 (schiff-base intermediate with substrate; via pyruvic acid) is an active-site residue. Ser112 carries the pyruvic acid (Ser); by autocatalysis modification. The active-site Proton acceptor; for processing activity is His117. Residue Cys140 is the Proton donor; for catalytic activity of the active site.

The protein belongs to the prokaryotic AdoMetDC family. Type 2 subfamily. In terms of assembly, heterooctamer of four alpha and four beta chains arranged as a tetramer of alpha/beta heterodimers. Requires pyruvate as cofactor. In terms of processing, is synthesized initially as an inactive proenzyme. Formation of the active enzyme involves a self-maturation process in which the active site pyruvoyl group is generated from an internal serine residue via an autocatalytic post-translational modification. Two non-identical subunits are generated from the proenzyme in this reaction, and the pyruvate is formed at the N-terminus of the alpha chain, which is derived from the carboxyl end of the proenzyme. The post-translation cleavage follows an unusual pathway, termed non-hydrolytic serinolysis, in which the side chain hydroxyl group of the serine supplies its oxygen atom to form the C-terminus of the beta chain, while the remainder of the serine residue undergoes an oxidative deamination to produce ammonia and the pyruvoyl group blocking the N-terminus of the alpha chain.

The catalysed reaction is S-adenosyl-L-methionine + H(+) = S-adenosyl 3-(methylsulfanyl)propylamine + CO2. Its pathway is amine and polyamine biosynthesis; S-adenosylmethioninamine biosynthesis; S-adenosylmethioninamine from S-adenosyl-L-methionine: step 1/1. Catalyzes the decarboxylation of S-adenosylmethionine to S-adenosylmethioninamine (dcAdoMet), the propylamine donor required for the synthesis of the polyamines spermine and spermidine from the diamine putrescine. This Salmonella arizonae (strain ATCC BAA-731 / CDC346-86 / RSK2980) protein is S-adenosylmethionine decarboxylase proenzyme.